The following is a 193-amino-acid chain: Ion-translocating oxidoreductase complex subunit B (193 aa).

The hydrophobic stretch occupies residues 1–23; the sequence is MTFLFIVITLLALIFGAILGFAS. The 4Fe-4S domain maps to 29–87; sequence EADPVVEKIDAILPQSQCGQCGYPGCKPYAEAICNGDEITKCIPGGQTTIVKIAEILGV. 12 residues coordinate [4Fe-4S] cluster: C46, C49, C54, C70, C110, C113, C116, C120, C140, C143, C146, and C150. 2 4Fe-4S ferredoxin-type domains span residues 101-130 and 131-160; these read KVAF…GTNK and AMHT…MIPV.

This sequence belongs to the 4Fe4S bacterial-type ferredoxin family. RnfB subfamily. As to quaternary structure, the complex is composed of six subunits: RnfA, RnfB, RnfC, RnfD, RnfE and RnfG. [4Fe-4S] cluster serves as cofactor.

It is found in the cell inner membrane. Its function is as follows. Part of a membrane-bound complex that couples electron transfer with translocation of ions across the membrane. The protein is Ion-translocating oxidoreductase complex subunit B of Haemophilus influenzae (strain 86-028NP).